The following is a 514-amino-acid chain: 2,3-bisphosphoglycerate-independent phosphoglycerate mutase (514 aa).

Residues Asp-14 and Ser-64 each coordinate Mn(2+). The active-site Phosphoserine intermediate is Ser-64. Substrate is bound by residues His-125, Arg-155 to Asp-156, Arg-187, Arg-193, Arg-263 to Arg-266, and Lys-336. 5 residues coordinate Mn(2+): Asp-403, His-407, Asp-444, His-445, and His-463.

This sequence belongs to the BPG-independent phosphoglycerate mutase family. As to quaternary structure, monomer. Mn(2+) is required as a cofactor.

It catalyses the reaction (2R)-2-phosphoglycerate = (2R)-3-phosphoglycerate. It participates in carbohydrate degradation; glycolysis; pyruvate from D-glyceraldehyde 3-phosphate: step 3/5. Its function is as follows. Catalyzes the interconversion of 2-phosphoglycerate and 3-phosphoglycerate. The sequence is that of 2,3-bisphosphoglycerate-independent phosphoglycerate mutase from Shewanella baltica (strain OS195).